A 165-amino-acid chain; its full sequence is MALRMWASSTANALKLSSSSRLHLSPTFSISRCFSNVLDGLKYAPSHEWVKHEGSVATIGITDHAQDHLGEVVFVELPEPGVSVTKGKGFGAVESVKATSDVNSPISGEVIEVNTGLTGKPGLINSSPYEDGWMIKIKPTSPDELESLLGAKEYTKFCEEEDAAH.

Residues 1 to 34 constitute a mitochondrion transit peptide; that stretch reads MALRMWASSTANALKLSSSSRLHLSPTFSISRCF. The region spanning 56–138 is the Lipoyl-binding domain; the sequence is VATIGITDHA…YEDGWMIKIK (83 aa). Residue Lys97 is modified to N6-lipoyllysine.

The protein belongs to the GcvH family. The glycine cleavage system is composed of four proteins: P, T, L and H. It depends on (R)-lipoate as a cofactor.

The protein localises to the mitochondrion. Its function is as follows. The glycine cleavage system catalyzes the degradation of glycine. The H protein shuttles the methylamine group of glycine from the P protein to the T protein. This is Glycine cleavage system H protein, mitochondrial (GDCSH) from Pisum sativum (Garden pea).